Here is a 263-residue protein sequence, read N- to C-terminus: uncharacterized protein (263 aa).

ATP is bound at residue 31–38 (GPTGSGKT).

It belongs to the CbbQ/NirQ/NorQ/GpvN family.

This is an uncharacterized protein from Staphylococcus epidermidis (strain ATCC 12228 / FDA PCI 1200).